Consider the following 218-residue polypeptide: Eukaryotic translation initiation factor 3 subunit K (218 aa).

Position 2 is an N-acetylalanine (A2). A Phosphothreonine modification is found at T28. Positions 42-204 (YDLEANLAVL…SIKPKNIVEK (163 aa)) constitute a PCI domain. S217 is subject to Phosphoserine.

Belongs to the eIF-3 subunit K family. Component of the eukaryotic translation initiation factor 3 (eIF-3) complex, which is composed of 13 subunits: EIF3A, EIF3B, EIF3C, EIF3D, EIF3E, EIF3F, EIF3G, EIF3H, EIF3I, EIF3J, EIF3K, EIF3L and EIF3M. The eIF-3 complex appears to include 3 stable modules: module A is composed of EIF3A, EIF3B, EIF3G and EIF3I; module B is composed of EIF3F, EIF3H, and EIF3M; and module C is composed of EIF3C, EIF3D, EIF3E, EIF3K and EIF3L. EIF3C of module C binds EIF3B of module A and EIF3H of module B, thereby linking the three modules. EIF3J is a labile subunit that binds to the eIF-3 complex via EIF3B. The eIF-3 complex interacts with RPS6KB1 under conditions of nutrient depletion. Mitogenic stimulation leads to binding and activation of a complex composed of MTOR and RPTOR, leading to phosphorylation and release of RPS6KB1 and binding of EIF4B to eIF-3. Interacts with CCND3, but not with CCND1 and CCND2.

The protein localises to the nucleus. It is found in the cytoplasm. Component of the eukaryotic translation initiation factor 3 (eIF-3) complex, which is required for several steps in the initiation of protein synthesis. The eIF-3 complex associates with the 40S ribosome and facilitates the recruitment of eIF-1, eIF-1A, eIF-2:GTP:methionyl-tRNAi and eIF-5 to form the 43S pre-initiation complex (43S PIC). The eIF-3 complex stimulates mRNA recruitment to the 43S PIC and scanning of the mRNA for AUG recognition. The eIF-3 complex is also required for disassembly and recycling of post-termination ribosomal complexes and subsequently prevents premature joining of the 40S and 60S ribosomal subunits prior to initiation. The eIF-3 complex specifically targets and initiates translation of a subset of mRNAs involved in cell proliferation, including cell cycling, differentiation and apoptosis, and uses different modes of RNA stem-loop binding to exert either translational activation or repression. In Bos taurus (Bovine), this protein is Eukaryotic translation initiation factor 3 subunit K.